A 264-amino-acid polypeptide reads, in one-letter code: GTP cyclohydrolase FolE2 (264 aa).

Belongs to the GTP cyclohydrolase IV family.

It catalyses the reaction GTP + H2O = 7,8-dihydroneopterin 3'-triphosphate + formate + H(+). It functions in the pathway cofactor biosynthesis; 7,8-dihydroneopterin triphosphate biosynthesis; 7,8-dihydroneopterin triphosphate from GTP: step 1/1. Functionally, converts GTP to 7,8-dihydroneopterin triphosphate. The protein is GTP cyclohydrolase FolE2 of Vesicomyosocius okutanii subsp. Calyptogena okutanii (strain HA).